The primary structure comprises 312 residues: Protoheme IX farnesyltransferase (312 aa).

9 helical membrane-spanning segments follow: residues 29–49, 50–70, 90–110, 117–137, 150–170, 177–197, 223–243, 246–266, and 292–312; these read VMSL…GHMN, PVLA…SGAL, IPAG…LSAF, LMVN…YAVI, IVIG…AATG, LVLF…LSLF, ALFY…MGFA, FYGV…WRLW, and IFAV…FGVF.

Belongs to the UbiA prenyltransferase family. Protoheme IX farnesyltransferase subfamily.

It localises to the cell inner membrane. It carries out the reaction heme b + (2E,6E)-farnesyl diphosphate + H2O = Fe(II)-heme o + diphosphate. The protein operates within porphyrin-containing compound metabolism; heme O biosynthesis; heme O from protoheme: step 1/1. Its function is as follows. Converts heme B (protoheme IX) to heme O by substitution of the vinyl group on carbon 2 of heme B porphyrin ring with a hydroxyethyl farnesyl side group. The sequence is that of Protoheme IX farnesyltransferase from Brucella melitensis biotype 1 (strain ATCC 23456 / CCUG 17765 / NCTC 10094 / 16M).